Consider the following 323-residue polypeptide: Acetyl esterase (323 aa).

The Involved in the stabilization of the negatively charged intermediate by the formation of the oxyanion hole motif lies at His91–Gly93. Residues Ser165, Asp262, and His292 contribute to the active site.

Belongs to the 'GDXG' lipolytic enzyme family. As to quaternary structure, homodimer. Interacts with MalT and MelA.

The protein localises to the cytoplasm. Displays esterase activity towards short chain fatty esters (acyl chain length of up to 8 carbons). Able to hydrolyze triacetylglycerol (triacetin) and tributyrylglycerol (tributyrin), but not trioleylglycerol (triolein) or cholesterol oleate. Negatively regulates MalT activity by antagonizing maltotriose binding. Inhibits MelA galactosidase activity. This is Acetyl esterase from Salmonella dublin (strain CT_02021853).